The primary structure comprises 546 residues: MSTPSSRSQAPETVTTGPIQGSEKIYQELPNGLRVPQRRVNLTNGEYLDLYDTSGPYTDTNAVIDLHKGLPPRAGIVTDRGTQLQRARAGEITAEMEFIAVREGVPAELVRTEVAAGRAVIPANHKHPESEPMIIGKAFGVKINANIGNSAVTSSIAEEVEKMVWAIRWGADNIMDLSTGKDIHQTREWILRNSPVPVGTVPIYQALEKTNGDPAALTWELYRDTVIEQAEQGVDYMTVHAGVLLRYVPLTAKRVTGIVSRGGSIMAAWCLAHHRESFLYTHFEELCEILARYDVTFSLGDGLRPGSIADANDEAQFAELRTLGELTKIAKSHGVQVMIEGPGHVPMHKIVENVKLEEELCEEAPFYTLGPLATDIAPAYDHITSAIGAAIIAQAGTAMLCYVTPKEHLGLPDRKDVKDGVIAYKIAAHSADLAKGHPRAQLRDNALSKARFEFRWEDQFNLSLDPDTAREFHDETLPAEPAKTAHFCSMCGPKFCSMRITADIREFAAENGLETQEDIDAMLARGMEEKSAEFAEHGNRVYLPIA.

Positions 1–19 (MSTPSSRSQAPETVTTGPI) are enriched in polar residues. Residues 1 to 20 (MSTPSSRSQAPETVTTGPIQ) form a disordered region. Residues Asn146, Met175, Tyr204, His240, 260–262 (SRG), 301–304 (DGLR), and Glu340 contribute to the substrate site. His344 serves as a coordination point for Zn(2+). Tyr367 provides a ligand contact to substrate. His408 is a Zn(2+) binding site. Positions 488, 491, and 496 each coordinate [4Fe-4S] cluster.

This sequence belongs to the ThiC family. It depends on [4Fe-4S] cluster as a cofactor.

It carries out the reaction 5-amino-1-(5-phospho-beta-D-ribosyl)imidazole + S-adenosyl-L-methionine = 4-amino-2-methyl-5-(phosphooxymethyl)pyrimidine + CO + 5'-deoxyadenosine + formate + L-methionine + 3 H(+). It participates in cofactor biosynthesis; thiamine diphosphate biosynthesis. In terms of biological role, catalyzes the synthesis of the hydroxymethylpyrimidine phosphate (HMP-P) moiety of thiamine from aminoimidazole ribotide (AIR) in a radical S-adenosyl-L-methionine (SAM)-dependent reaction. The sequence is that of Phosphomethylpyrimidine synthase from Mycobacteroides abscessus (strain ATCC 19977 / DSM 44196 / CCUG 20993 / CIP 104536 / JCM 13569 / NCTC 13031 / TMC 1543 / L948) (Mycobacterium abscessus).